Reading from the N-terminus, the 444-residue chain is Methylenetetrahydrofolate--tRNA-(uracil-5-)-methyltransferase TrmFO (444 aa).

An FAD-binding site is contributed by 10–15 (GAGLAG).

This sequence belongs to the MnmG family. TrmFO subfamily. It depends on FAD as a cofactor.

Its subcellular location is the cytoplasm. It catalyses the reaction uridine(54) in tRNA + (6R)-5,10-methylene-5,6,7,8-tetrahydrofolate + NADH + H(+) = 5-methyluridine(54) in tRNA + (6S)-5,6,7,8-tetrahydrofolate + NAD(+). The enzyme catalyses uridine(54) in tRNA + (6R)-5,10-methylene-5,6,7,8-tetrahydrofolate + NADPH + H(+) = 5-methyluridine(54) in tRNA + (6S)-5,6,7,8-tetrahydrofolate + NADP(+). Functionally, catalyzes the folate-dependent formation of 5-methyl-uridine at position 54 (M-5-U54) in all tRNAs. The protein is Methylenetetrahydrofolate--tRNA-(uracil-5-)-methyltransferase TrmFO of Streptococcus sanguinis (strain SK36).